Reading from the N-terminus, the 183-residue chain is Ribosome-recycling factor (183 aa).

The protein belongs to the RRF family.

It localises to the cytoplasm. Functionally, responsible for the release of ribosomes from messenger RNA at the termination of protein biosynthesis. May increase the efficiency of translation by recycling ribosomes from one round of translation to another. This is Ribosome-recycling factor from Treponema pallidum (strain Nichols).